We begin with the raw amino-acid sequence, 845 residues long: Proto-oncogene vav (845 aa).

The 119-residue stretch at 1 to 119 (MELWRQCTHW…YTLSALSWTP (119 aa)) folds into the Calponin-homology (CH) domain. The DH domain maps to 194–373 (KRCCCLREIQ…RDLAQCVNEV (180 aa)). Residues 402-504 (RPKIDGELKI…WMEQFEMAIS (103 aa)) enclose the PH domain. A Phorbol-ester/DAG-type zinc finger spans residues 515–564 (GHDFQMFSFEETTSCKACQMLLRGTFYQGYRCYRCRAPAHKECLGRVPPC). Positions 592–660 (LGLPKMEVFQ…PCNRVHPYVH (69 aa)) constitute an SH3 1 domain. The 95-residue stretch at 671–765 (WYAGPMERAG…SLDTTLQFPY (95 aa)) folds into the SH2 domain. In terms of domain architecture, SH3 2 spans 782-842 (KYFGTAKARY…PSNYVEEDYS (61 aa)). Residues Y826 and Y844 each carry the phosphotyrosine modification.

As to quaternary structure, interacts with SHB. Interacts with APS, DOCK2, GRB2, GRB3, DOCK2, SLA, TEC and ZNF655/VIK. Interacts with SIAH2; without leading to its degradation. Associates with BLNK, PLCG1, GRB2 and NCK1 in a B-cell antigen receptor-dependent fashion. Interacts with CBLB; which inhibits tyrosine phosphorylation and down-regulates activity. May interact with CCPG1. Interacts with CLNK. Interacts with THEMIS2. Interacts with NEK3 and this interaction is prolactin-dependent. Interacts with ITK. Interacts with PTK2B/PYK2. Interacts with HCK. Interacts with PTK2B/PYK2. Interacts (via SH2 domain) with SYK. Interacts with ANKRD54. Interacts with CD6. Interacts with isoform 2 of CRACR2A. Interacts with LCP2; this interaction plays a role in TCR-mediated cytokine production. Phosphorylated by FYN. Phosphorylated on tyrosine residues by HCK in response to IFNG and bacterial lipopolysaccharide (LPS). As to expression, widely expressed in hematopoietic cells but not in other cell types. Found in the spleen and lung.

Functionally, couples tyrosine kinase signals with the activation of the Rho/Rac GTPases, thus leading to cell differentiation and/or proliferation. The polypeptide is Proto-oncogene vav (Vav1) (Mus musculus (Mouse)).